The primary structure comprises 1270 residues: Microtubule-associated tumor suppressor 1 homolog (1270 aa).

Positions 1 to 14 (MTDDNSDDKIEDEL) are enriched in acidic residues. Disordered regions lie at residues 1 to 50 (MTDD…NSAN), 183 to 217 (SFHTAGSLPPTGRRSGNTSSLSYSTWTSSHSDKMH), and 374 to 402 (TEDTQMVTKGKDSGTQNHTSELILSSPPG). Over residues 39 to 50 (SSASSVNWNSAN) the composition is skewed to low complexity. Residue Thr-186 is modified to Phosphothreonine. Low complexity predominate over residues 200-211 (TSSLSYSTWTSS). Residues Ser-386, Ser-399, and Ser-443 each carry the phosphoserine modification. Residues 386–396 (SGTQNHTSELI) show a composition bias toward polar residues. Disordered regions lie at residues 524-558 (DAALSKVTPRPQLTSASSPSSAISRQPTVLSRTPR) and 592-622 (THSKNASHRVPRTTSAVKSNQEDVDKASSSN). Over residues 538 to 547 (SASSPSSAIS) the composition is skewed to low complexity. Residue Ser-629 is modified to Phosphoserine. Composition is skewed to polar residues over residues 701-710 (SKTTTTSGRN), 759-776 (VSSSGKPTSLKTAQSSWV), and 797-816 (TGSTPSIASTHSELSTYSNN). The tract at residues 701–816 (SKTTTTSGRN…HSELSTYSNN (116 aa)) is disordered. The stretch at 940–1231 (IQHLLSEREE…RLSMENEELL (292 aa)) forms a coiled coil. Ser-1203, Ser-1224, Ser-1245, Ser-1255, Ser-1259, Ser-1261, Ser-1264, and Ser-1268 each carry phosphoserine. The tract at residues 1237–1270 (GDLCSPKRSPTSSAIPFQSPRNSGSFPSPSISPR) is disordered. Positions 1244–1270 (RSPTSSAIPFQSPRNSGSFPSPSISPR) are enriched in polar residues.

This sequence belongs to the MTUS1 family. In terms of assembly, homodimer. Interacts with AGTR2. Interacts with PTPN6. Associates with microtubules.

It localises to the mitochondrion. The protein resides in the golgi apparatus. It is found in the cell membrane. Its subcellular location is the nucleus. Cooperates with AGTR2 to inhibit ERK2 activation and cell proliferation. May be required for AGTR2 cell surface expression. Together with PTPN6, induces UBE2V2 expression upon angiotensin-II stimulation. This Pongo abelii (Sumatran orangutan) protein is Microtubule-associated tumor suppressor 1 homolog (MTUS1).